Reading from the N-terminus, the 183-residue chain is Somatotropin (183 aa).

His-19 provides a ligand contact to Zn(2+). The disordered stretch occupies residues 38 to 67 (EEQRHSHKSSPSAFCQSETIPAPTGKEDAQ). Polar residues predominate over residues 46-56 (SSPSAFCQSET). Residues Cys-52 and Cys-156 are joined by a disulfide bond. Glu-165 contributes to the Zn(2+) binding site. Residues Cys-173 and Cys-181 are joined by a disulfide bond.

Belongs to the somatotropin/prolactin family.

The protein localises to the secreted. Growth hormone plays an important role in growth control and is involved in the regulation of several anabolic processes. Implicated as an osmoregulatory substance important for seawater adaptation. The protein is Somatotropin (gh) of Prionace glauca (Blue shark).